Consider the following 333-residue polypeptide: DNA-directed RNA polymerase subunit alpha (333 aa).

The tract at residues 1–234 (MQSSVNEFLT…QQLAAFVDLK (234 aa)) is alpha N-terminal domain (alpha-NTD). The interval 248–333 (IDPILLRPVD…SLKKDDKATA (86 aa)) is alpha C-terminal domain (alpha-CTD).

Belongs to the RNA polymerase alpha chain family. In terms of assembly, homodimer. The RNAP catalytic core consists of 2 alpha, 1 beta, 1 beta' and 1 omega subunit. When a sigma factor is associated with the core the holoenzyme is formed, which can initiate transcription.

It carries out the reaction RNA(n) + a ribonucleoside 5'-triphosphate = RNA(n+1) + diphosphate. Its function is as follows. DNA-dependent RNA polymerase catalyzes the transcription of DNA into RNA using the four ribonucleoside triphosphates as substrates. The chain is DNA-directed RNA polymerase subunit alpha from Pseudomonas aeruginosa (strain UCBPP-PA14).